Here is a 341-residue protein sequence, read N- to C-terminus: ATP-dependent 6-phosphofructokinase 3 (341 aa).

Residues glycine 10, 72-73 (RV), and 102-105 (GEGT) each bind ATP. Glutamate 103 contributes to the Mg(2+) binding site. Substrate-binding positions include 125–127 (TID), arginine 162, 169–171 (MGR), glutamate 222, arginine 266, and 272–275 (HVQR). Aspartate 127 functions as the Proton acceptor in the catalytic mechanism.

Belongs to the phosphofructokinase type A (PFKA) family. Mixed-substrate PFK group III subfamily. As to quaternary structure, homodimer or homotetramer. Mg(2+) is required as a cofactor.

It localises to the cytoplasm. It carries out the reaction beta-D-fructose 6-phosphate + ATP = beta-D-fructose 1,6-bisphosphate + ADP + H(+). It participates in carbohydrate degradation; glycolysis; D-glyceraldehyde 3-phosphate and glycerone phosphate from D-glucose: step 3/4. Catalyzes the phosphorylation of D-fructose 6-phosphate to fructose 1,6-bisphosphate by ATP, the first committing step of glycolysis. The polypeptide is ATP-dependent 6-phosphofructokinase 3 (Streptomyces coelicolor (strain ATCC BAA-471 / A3(2) / M145)).